A 339-amino-acid chain; its full sequence is Phenylalanine--tRNA ligase alpha subunit (339 aa).

Glu-250 contacts Mg(2+).

It belongs to the class-II aminoacyl-tRNA synthetase family. Phe-tRNA synthetase alpha subunit type 1 subfamily. Tetramer of two alpha and two beta subunits. It depends on Mg(2+) as a cofactor.

The protein resides in the cytoplasm. The catalysed reaction is tRNA(Phe) + L-phenylalanine + ATP = L-phenylalanyl-tRNA(Phe) + AMP + diphosphate + H(+). In Christiangramia forsetii (strain DSM 17595 / CGMCC 1.15422 / KT0803) (Gramella forsetii), this protein is Phenylalanine--tRNA ligase alpha subunit.